The sequence spans 228 residues: Adenosylcobinamide-GDP ribazoletransferase (228 aa).

6 helical membrane-spanning segments follow: residues 24–44 (VWML…ILYL), 50–70 (NVLS…DGLA), 96–116 (IAGT…LFSA), 117–137 (PFYS…LALA), 159–176 (VFLG…ILLY), and 181–198 (IFAL…KISL).

Belongs to the CobS family. Mg(2+) serves as cofactor.

The protein resides in the cell membrane. It carries out the reaction alpha-ribazole + adenosylcob(III)inamide-GDP = adenosylcob(III)alamin + GMP + H(+). It catalyses the reaction alpha-ribazole 5'-phosphate + adenosylcob(III)inamide-GDP = adenosylcob(III)alamin 5'-phosphate + GMP + H(+). The protein operates within cofactor biosynthesis; adenosylcobalamin biosynthesis; adenosylcobalamin from cob(II)yrinate a,c-diamide: step 7/7. In terms of biological role, joins adenosylcobinamide-GDP and alpha-ribazole to generate adenosylcobalamin (Ado-cobalamin). Also synthesizes adenosylcobalamin 5'-phosphate from adenosylcobinamide-GDP and alpha-ribazole 5'-phosphate. This chain is Adenosylcobinamide-GDP ribazoletransferase, found in Pyrococcus furiosus (strain ATCC 43587 / DSM 3638 / JCM 8422 / Vc1).